The chain runs to 95 residues: Scytovirin (95 aa).

Residues 3 to 41 are SD1; that stretch reads GPTYCWNEANNPGGPNRCSNNKQCDGARTCSSSGFCQGT. Disulfide bonds link cysteine 7–cysteine 55, cysteine 20–cysteine 32, cysteine 26–cysteine 38, cysteine 68–cysteine 80, and cysteine 74–cysteine 86. The segment at 51–89 is SD2; the sequence is GPTYCWDEAKNPGGPNRCSNSKQCDGARTCSSSGFCQGT.

Its function is as follows. Has strong anti-HIV activity against T-tropic strains of HIV-1 and weaker activity against M-tropic strains of HIV-1. Inhibits HIV-1 fusion and infection of CD4 LTR beta-gal cells in vitro. Inhibits fusion of HIV infected CEM-SS cells with uninfected CEM-SS cells, and fusion of HIV-1 Env expressing HL2/3 cells with CD4 LTR beta-gal cells. Binds to HIV gp120, HIV gp160 and to a lesser extent HIV gp41. Binding to HIV gp120 is glycosylation dependent. Binds with high specificity to the tetrasaccharide Man-alpha-1,2-Man-alpha-1,6-Man-alpha-1,6-Man and also binds the higher-order oligosaccharides oligomannose 8 and oligomannose 9. Does not bind to monosaccharides, complex or hybrid N-linked oligosaccharides or chitin. The sequence is that of Scytovirin from Scytonema varium.